We begin with the raw amino-acid sequence, 179 residues long: Cytochrome c-type biogenesis protein CcmE (179 aa).

The Cytoplasmic portion of the chain corresponds to 1 to 8; the sequence is MNPRRKSR. Residues 9–29 traverse the membrane as a helical; Signal-anchor for type II membrane protein segment; sequence LTIILFVLLGVTIASSLVLYA. Residues 30 to 179 lie on the Periplasmic side of the membrane; the sequence is LRQNIDLFYT…AVNSVEEGKK (150 aa). 2 residues coordinate heme: His131 and Tyr135. 2 stretches are compositionally biased toward basic and acidic residues: residues 138–148 and 161–179; these read PDLSEKMEQVH and ESDR…EGKK. The disordered stretch occupies residues 138–179; it reads PDLSEKMEQVHKPMGISNQDMQGESDRDRLDKAVNSVEEGKK.

This sequence belongs to the CcmE/CycJ family.

It is found in the cell inner membrane. Heme chaperone required for the biogenesis of c-type cytochromes. Transiently binds heme delivered by CcmC and transfers the heme to apo-cytochromes in a process facilitated by CcmF and CcmH. This is Cytochrome c-type biogenesis protein CcmE from Mannheimia succiniciproducens (strain KCTC 0769BP / MBEL55E).